Reading from the N-terminus, the 442-residue chain is Putative amino acid transporter YuiF (442 aa).

A run of 11 helical transmembrane segments spans residues 21 to 41 (IVIALIIGALAGGLTGGLGLG), 51 to 71 (LGGNATVAVSYAMLGAFAAAL), 103 to 123 (LIVLIILIVSCFSQNVVPVHI), 146 to 166 (LIACVITFGLTAPYILLPVGF), 190 to 210 (IPYALIIPVAGMVVGLILSVI), 236 to 256 (IGIAVLAIVVSLGVQLYLSQT), 259 to 279 (VEGMIMGALAGLIVLFVSGVM), 292 to 312 (MVLMAFIGFVMLVAAGFSNVL), 335 to 355 (LGALLMLIVGLLITMGIGSSF), 364 to 384 (IFVPLCMQLGFSPMATIAIIG), and 421 to 441 (VPTFIFYNIPLVIFGWIAALV).

The protein localises to the cell membrane. This is Putative amino acid transporter YuiF (yuiF) from Bacillus subtilis (strain 168).